A 924-amino-acid polypeptide reads, in one-letter code: Lon protease homolog 3, mitochondrial (924 aa).

The N-terminal 63 residues, 1–63 (MMPKRFNTSG…PVQSLLLFRA (63 aa)), are a transit peptide targeting the mitochondrion. The 214-residue stretch at 112-325 (VIALPLPHKP…LTLELVKKQV (214 aa)) folds into the Lon N-terminal domain. 447 to 454 (GPPGVGKT) lines the ATP pocket. The region spanning 738–922 (QTPVGVVMGL…EKIFDLAFNY (185 aa)) is the Lon proteolytic domain. Catalysis depends on residues Ser828 and Lys871.

This sequence belongs to the peptidase S16 family. In terms of assembly, homohexamer or homoheptamer. Organized in a ring with a central cavity.

It localises to the mitochondrion matrix. It carries out the reaction Hydrolysis of proteins in presence of ATP.. Functionally, ATP-dependent serine protease that mediates the selective degradation of misfolded, unassembled or oxidatively damaged polypeptides as well as certain short-lived regulatory proteins in the mitochondrial matrix. May also have a chaperone function in the assembly of inner membrane protein complexes. Participates in the regulation of mitochondrial gene expression and in the maintenance of the integrity of the mitochondrial genome. Binds to mitochondrial DNA in a site-specific manner. In Arabidopsis thaliana (Mouse-ear cress), this protein is Lon protease homolog 3, mitochondrial (LON3).